The sequence spans 51 residues: Large ribosomal subunit protein eL39 (51 aa).

It belongs to the eukaryotic ribosomal protein eL39 family. In terms of assembly, part of the 50S ribosomal subunit.

The protein is Large ribosomal subunit protein eL39 of Thermococcus kodakarensis (strain ATCC BAA-918 / JCM 12380 / KOD1) (Pyrococcus kodakaraensis (strain KOD1)).